Consider the following 298-residue polypeptide: uncharacterized protein (298 aa).

10 helical membrane-spanning segments follow: residues 5-25, 36-56, 76-96, 97-117, 124-144, 147-167, 181-201, 216-236, 244-264, and 272-292; these read ILFG…MSAF, MENV…IYPF, VVVG…ISLA, TATA…PLLL, STLI…DPSV, VGPV…LAYI, VILA…FIDI, ILWI…LTYA, IIAP…LYLG, and SSLG…PALL. Positions 17-141 constitute an EamA 1 domain; the sequence is LCFGIMSAFV…GIVGVVLISD (125 aa). Residues 183–288 form the EamA 2 domain; that stretch reads LAFAFGMSLL…ILCSGLLIAL (106 aa).

This sequence belongs to the EamA transporter family.

The protein resides in the cell membrane. This is an uncharacterized protein from Helicobacter pylori (strain ATCC 700392 / 26695) (Campylobacter pylori).